The primary structure comprises 293 residues: 3-methyl-2-oxobutanoate hydroxymethyltransferase (293 aa).

The interval 1 to 29 (MTAAHDRSENQPGRPGGETTAPYGSAPRR) is disordered. Mg(2+) contacts are provided by aspartate 73 and aspartate 112. Residues 73–74 (DS), aspartate 112, and lysine 142 contribute to the 3-methyl-2-oxobutanoate site. Residue glutamate 144 participates in Mg(2+) binding. Glutamate 210 functions as the Proton acceptor in the catalytic mechanism.

Belongs to the PanB family. As to quaternary structure, homodecamer; pentamer of dimers. Mg(2+) serves as cofactor.

The protein resides in the cytoplasm. The catalysed reaction is 3-methyl-2-oxobutanoate + (6R)-5,10-methylene-5,6,7,8-tetrahydrofolate + H2O = 2-dehydropantoate + (6S)-5,6,7,8-tetrahydrofolate. The protein operates within cofactor biosynthesis; (R)-pantothenate biosynthesis; (R)-pantoate from 3-methyl-2-oxobutanoate: step 1/2. In terms of biological role, catalyzes the reversible reaction in which hydroxymethyl group from 5,10-methylenetetrahydrofolate is transferred onto alpha-ketoisovalerate to form ketopantoate. This Saccharopolyspora erythraea (strain ATCC 11635 / DSM 40517 / JCM 4748 / NBRC 13426 / NCIMB 8594 / NRRL 2338) protein is 3-methyl-2-oxobutanoate hydroxymethyltransferase.